The following is a 487-amino-acid chain: MNKPLKILLVSPEVAPLAKTGGLADVAGSLPKALAAKGHEVRVAMPRYRQVKEVNYLTDLPVEMDGSLETAVIRQGKLPGEAGIPVYLIDNYKFFYRDGMYGYGDDAARFNFFCKAVLSMLPWLEFQPDIIHCNDWQTGPIPLFLKVKHEDNPFYRETATIYTIHNLQYQGTFPRNILKTMALSEEFFVPERLEFYGQVSYMKAGILYADLVNTVSKKYALEIQTPEYGERLDGLLRKRAADLRGILNGIDYEEFDPATDRRLAVNYDADHLEKKGENKAALQREMELPVRDVPVLGLISRLVSQKGLDLLAAILDPLMQQDLQFVLLGSGEDYYQQLFSRYKVKYRDKMAVKIGFDPVLAQHIYAGCDIFLMPSRFEPCGLGQMISLRYGAVPVVRATGGLEDTIKDLHQYPGVGNGFTFRDYQPQALLDTINRALHVYRHEPGEWRKLMRRGMAADFSWSASAGHYEEMYREALEKRRAAMFKVG.

Residue Lys19 coordinates ADP-alpha-D-glucose.

The protein belongs to the glycosyltransferase 1 family. Bacterial/plant glycogen synthase subfamily.

The enzyme catalyses [(1-&gt;4)-alpha-D-glucosyl](n) + ADP-alpha-D-glucose = [(1-&gt;4)-alpha-D-glucosyl](n+1) + ADP + H(+). It participates in glycan biosynthesis; glycogen biosynthesis. Its function is as follows. Synthesizes alpha-1,4-glucan chains using ADP-glucose. The chain is Glycogen synthase from Moorella thermoacetica (strain ATCC 39073 / JCM 9320).